A 411-amino-acid chain; its full sequence is Phosphoribosylaminoimidazole-succinocarboxamide synthase, chloroplastic (411 aa).

The N-terminal 53 residues, 1-53 (MAQCVRSTLNPVRTPQSFTRKAYVKSPAFASVSFLRAVPEFNKYPKPCSLVMS), are a transit peptide targeting the chloroplast.

Belongs to the SAICAR synthetase family.

The protein localises to the plastid. It localises to the chloroplast. The catalysed reaction is 5-amino-1-(5-phospho-D-ribosyl)imidazole-4-carboxylate + L-aspartate + ATP = (2S)-2-[5-amino-1-(5-phospho-beta-D-ribosyl)imidazole-4-carboxamido]succinate + ADP + phosphate + 2 H(+). It participates in purine metabolism; IMP biosynthesis via de novo pathway; 5-amino-1-(5-phospho-D-ribosyl)imidazole-4-carboxamide from 5-amino-1-(5-phospho-D-ribosyl)imidazole-4-carboxylate: step 1/2. This is Phosphoribosylaminoimidazole-succinocarboxamide synthase, chloroplastic (PUR7) from Arabidopsis thaliana (Mouse-ear cress).